The primary structure comprises 128 residues: Large ribosomal subunit protein bL21 (128 aa).

The segment at 104 to 128 (GKKPSVGPRPKRVKAEPAPAADAAE) is disordered. Residues 119-128 (EPAPAADAAE) are compositionally biased toward low complexity.

It belongs to the bacterial ribosomal protein bL21 family. Part of the 50S ribosomal subunit. Contacts protein L20.

In terms of biological role, this protein binds to 23S rRNA in the presence of protein L20. In Rhodopseudomonas palustris (strain BisB5), this protein is Large ribosomal subunit protein bL21.